The following is a 182-amino-acid chain: N-alpha-acetyltransferase daf-31 (182 aa).

Positions 1–152 (MNIRCARVDD…DAYAMRRDLA (152 aa)) constitute an N-acetyltransferase domain. Residues 162-182 (PADREAYTTAKTTDDKKKNRS) are disordered.

Belongs to the acetyltransferase family. ARD1 subfamily. Component of the N-terminal acetyltransferase A (NatA) complex. In terms of tissue distribution, expressed in head and tail hypodermal cells, hypodermal seam cells, pharynx, intestine and head and tail neurons.

It catalyses the reaction N-terminal glycyl-[protein] + acetyl-CoA = N-terminal N(alpha)-acetylglycyl-[protein] + CoA + H(+). The enzyme catalyses N-terminal L-alanyl-[protein] + acetyl-CoA = N-terminal N(alpha)-acetyl-L-alanyl-[protein] + CoA + H(+). It carries out the reaction N-terminal L-seryl-[protein] + acetyl-CoA = N-terminal N(alpha)-acetyl-L-seryl-[protein] + CoA + H(+). The catalysed reaction is N-terminal L-valyl-[protein] + acetyl-CoA = N-terminal N(alpha)-acetyl-L-valyl-[protein] + CoA + H(+). It catalyses the reaction N-terminal L-cysteinyl-[protein] + acetyl-CoA = N-terminal N(alpha)-acetyl-L-cysteinyl-[protein] + CoA + H(+). The enzyme catalyses N-terminal L-threonyl-[protein] + acetyl-CoA = N-terminal N(alpha)-acetyl-L-threonyl-[protein] + CoA + H(+). In terms of biological role, catalytic subunit of the N-terminal acetyltransferase A (NatA) complex which displays alpha (N-terminal) acetyltransferase activity. Plays a role in regulating larval development, metabolism and longevity. Functions downstream or alongside daf-3, daf-12 and daf-16 in the dauer formation pathway. Functions upstream of daf-15 to enable animal development. This is N-alpha-acetyltransferase daf-31 from Caenorhabditis elegans.